The sequence spans 895 residues: Protein translocase subunit SecA (895 aa).

ATP-binding positions include glutamine 87, 105–109 (GEGKT), and aspartate 512. The segment covering 833–852 (TQEEVEQAERQRQEMAKRET) has biased composition (basic and acidic residues). The interval 833–895 (TQEEVEQAER…KHCHGSKAKY (63 aa)) is disordered. Zn(2+)-binding residues include cysteine 877, cysteine 879, cysteine 888, and histidine 889. A compositionally biased stretch (basic residues) spans 883 to 895 (KKYKHCHGSKAKY).

The protein belongs to the SecA family. Monomer and homodimer. Part of the essential Sec protein translocation apparatus which comprises SecA, SecYEG and auxiliary proteins SecDF-YajC and YidC. Zn(2+) is required as a cofactor.

The protein localises to the cell inner membrane. Its subcellular location is the cytoplasm. It catalyses the reaction ATP + H2O + cellular proteinSide 1 = ADP + phosphate + cellular proteinSide 2.. In terms of biological role, part of the Sec protein translocase complex. Interacts with the SecYEG preprotein conducting channel. Has a central role in coupling the hydrolysis of ATP to the transfer of proteins into and across the cell membrane, serving both as a receptor for the preprotein-SecB complex and as an ATP-driven molecular motor driving the stepwise translocation of polypeptide chains across the membrane. In Pasteurella multocida (strain Pm70), this protein is Protein translocase subunit SecA.